Here is a 411-residue protein sequence, read N- to C-terminus: Dual-specificity RNA methyltransferase RlmN (411 aa).

E124 serves as the catalytic Proton acceptor. One can recognise a Radical SAM core domain in the interval 130–379 (EEGRGTLCIS…IRTPRGRDIL (250 aa)). Cysteines 137 and 382 form a disulfide. The [4Fe-4S] cluster site is built by C144, C148, and C151. Residues 208–209 (GE), S240, 262–264 (SLH), and N339 contribute to the S-adenosyl-L-methionine site. Catalysis depends on C382, which acts as the S-methylcysteine intermediate.

This sequence belongs to the radical SAM superfamily. RlmN family. [4Fe-4S] cluster serves as cofactor.

It localises to the cytoplasm. It catalyses the reaction adenosine(2503) in 23S rRNA + 2 reduced [2Fe-2S]-[ferredoxin] + 2 S-adenosyl-L-methionine = 2-methyladenosine(2503) in 23S rRNA + 5'-deoxyadenosine + L-methionine + 2 oxidized [2Fe-2S]-[ferredoxin] + S-adenosyl-L-homocysteine. The enzyme catalyses adenosine(37) in tRNA + 2 reduced [2Fe-2S]-[ferredoxin] + 2 S-adenosyl-L-methionine = 2-methyladenosine(37) in tRNA + 5'-deoxyadenosine + L-methionine + 2 oxidized [2Fe-2S]-[ferredoxin] + S-adenosyl-L-homocysteine. Its function is as follows. Specifically methylates position 2 of adenine 2503 in 23S rRNA and position 2 of adenine 37 in tRNAs. m2A2503 modification seems to play a crucial role in the proofreading step occurring at the peptidyl transferase center and thus would serve to optimize ribosomal fidelity. The polypeptide is Dual-specificity RNA methyltransferase RlmN (Rhizobium meliloti (strain 1021) (Ensifer meliloti)).